A 505-amino-acid chain; its full sequence is Glutamate--tRNA ligase (505 aa).

The 'HIGH' region motif lies at 12 to 22 (PSPTGPLHIGG). The 'KMSKS' region signature appears at 260-264 (KLSKR). Lys263 contacts ATP.

Belongs to the class-I aminoacyl-tRNA synthetase family. Glutamate--tRNA ligase type 1 subfamily. Monomer.

It is found in the cytoplasm. The enzyme catalyses tRNA(Glu) + L-glutamate + ATP = L-glutamyl-tRNA(Glu) + AMP + diphosphate. In terms of biological role, catalyzes the attachment of glutamate to tRNA(Glu) in a two-step reaction: glutamate is first activated by ATP to form Glu-AMP and then transferred to the acceptor end of tRNA(Glu). This is Glutamate--tRNA ligase from Porphyromonas gingivalis (strain ATCC BAA-308 / W83).